Consider the following 1033-residue polypeptide: MGAAGLLGVFLALVAPGVLGISCGSPPPILNGRISYYSTPIAVGTVIRYSCSGTFRLIGEKSLLCITKDKVDGTWDKPAPKCEYFNKYSSCPEPIVPGGYKIRGSTPYRHGDSVTFACKTNFSMNGNKSVWCQANNMWGPTRLPTCVSVFPLECPALPMIHNGHHTSENVGSIAPGLSVTYSCESGYLLVGEKIINCLSSGKWSAVPPTCEEARCKSLGRFPNGKVKEPPILRVGVTANFFCDEGYRLQGPPSSRCVIAGQGVAWTKMPVCEEIFCPSPPPILNGRHIGNSLANVSYGSIVTYTCDPDPEEGVNFILIGESTLRCTVDSQKTGTWSGPAPRCELSTSAVQCPHPQILRGRMVSGQKDRYTYNDTVIFACMFGFTLKGSKQIRCNAQGTWEPSAPVCEKECQAPPNILNGQKEDRHMVRFDPGTSIKYSCNPGYVLVGEESIQCTSEGVWTPPVPQCKVAACEATGRQLLTKPQHQFVRPDVNSSCGEGYKLSGSVYQECQGTIPWFMEIRLCKEITCPPPPVIYNGAHTGSSLEDFPYGTTVTYTCNPGPERGVEFSLIGESTIRCTSNDQERGTWSGPAPLCKLSLLAVQCSHVHIANGYKISGKEAPYFYNDTVTFKCYSGFTLKGSSQIRCKADNTWDPEIPVCEKETCQHVRQSLQELPAGSRVELVNTSCQDGYQLTGHAYQMCQDAENGIWFKKIPLCKVIHCHPPPVIVNGKHTGMMAENFLYGNEVSYECDQGFYLLGEKKLQCRSDSKGHGSWSGPSPQCLRSPPVTRCPNPEVKHGYKLNKTHSAYSHNDIVYVDCNPGFIMNGSRVIRCHTDNTWVPGVPTCIKKAFIGCPPPPKTPNGNHTGGNIARFSPGMSILYSCDQGYLLVGEALLLCTHEGTWSQPAPHCKEVNCSSPADMDGIQKGLEPRKMYQYGAVVTLECEDGYMLEGSPQSQCQSDHQWNPPLAVCRSRSLAPVLCGIAAGLILLTFLIVITLYVISKHRARNYYTDTSQKEAFHLEAREVYSVDPYNPAS.

Positions 1–20 (MGAAGLLGVFLALVAPGVLG) are cleaved as a signal peptide. 15 consecutive Sushi domains span residues 21–84 (ISCG…KCEY), 89–148 (SSCP…TCVS), 152–212 (LECP…TCEE), 213–273 (ARCK…VCEE), 274–344 (IFCP…RCEL), 349–408 (VQCP…VCEK), 409–468 (ECQA…QCKV), 469–524 (AACE…LCKE), 525–595 (ITCP…LCKL), 600–659 (VQCS…VCEK), 660–716 (ETCQ…LCKV), 717–781 (IHCH…QCLR), 786–845 (TRCP…TCIK), 849–909 (IGCP…HCKE), and 910–970 (VNCS…VCRS). At 21–971 (ISCGSPPPIL…NPPLAVCRSR (951 aa)) the chain is on the extracellular side. 28 cysteine pairs are disulfide-bonded: C23/C65, C51/C82, C91/C132, C118/C146, C154/C197, C183/C210, C215/C256, C242/C271, C276/C325, C305/C342, C351/C393, C379/C406, C410/C453, C439/C466, C471/C509, C495/C522, C527/C576, C556/C593, C602/C644, C630/C657, C662/C699, C685/C714, C719/C762, C748/C779, C788/C830, C816/C843, C851/C894, and C880/C907. N-linked (GlcNAc...) asparagine glycans are attached at residues N121 and N127. An N-linked (GlcNAc...) asparagine glycan is attached at N294. N-linked (GlcNAc...) asparagine glycosylation occurs at N372. The N-linked (GlcNAc...) asparagine glycan is linked to N492. N623 carries N-linked (GlcNAc...) asparagine glycosylation. N682 is a glycosylation site (N-linked (GlcNAc...) asparagine). N-linked (GlcNAc...) asparagine glycans are attached at residues N800, N823, and N861. Residue N911 is glycosylated (N-linked (GlcNAc...) asparagine). 2 cysteine pairs are disulfide-bonded: C912-C955 and C941-C968. Residues 972–999 (SLAPVLCGIAAGLILLTFLIVITLYVIS) traverse the membrane as a helical segment. Residues 1000–1033 (KHRARNYYTDTSQKEAFHLEAREVYSVDPYNPAS) lie on the Cytoplasmic side of the membrane.

This sequence belongs to the receptors of complement activation (RCA) family. As to quaternary structure, interacts (via Sushi domain 1 and 2) with C3. Interacts with CD19. Part of a complex composed of CD19, CR2/CD21, CD81 and IFITM1/CD225 in the membrane of mature B-cells. Interacts (via Sushi domain 1 and 2) with FCER2 (via the C-terminus). Interacts with CD23. Interacts with FCRL5. Interacts with CR1. Interacts with INFNA1. In terms of assembly, (Microbial infection) Interacts with Epstein-Barr virus gp350 protein. Mature B-lymphocytes, T-lymphocytes, pharyngeal epithelial cells, astrocytes and follicular dendritic cells of the spleen.

It localises to the cell membrane. Its function is as follows. Serves as a receptor for various ligands including complement component CD3d, HNRNPU OR IFNA1. When C3d is bound to antigens, attaches to C3d on B-cell surface and thereby facilitates the recognition and uptake of antigens by B-cells. This interaction enhances B-cell activation and subsequent immune responses. Forms a complex with several partners on the surface of B-cells including CD19, FCRL5 and CD81, to form the B-cell coreceptor complex that plays a crucial role in B-cell activation and signaling. Also induces specific intracellular signaling separately from the BCR and CD19 by activating the tyrosine kinase SRC, which then phosphorylates nucleolin/NCL and triggers AKT and GSK3 kinase activities in a SYK/CD19-independent manner. Acts as a ligand for CD23 (FcepsilonRII), a low-affinity receptor for IgE, which is expressed on B-cells and other immune cells, and thus participates in the regulation of IgE production. (Microbial infection) Acts as a receptor for Epstein-Barr virus. This Homo sapiens (Human) protein is Complement receptor type 2 (CR2).